The chain runs to 435 residues: 3-ketoacyl-CoA thiolase (435 aa).

C98 acts as the Acyl-thioester intermediate in catalysis. Catalysis depends on proton acceptor residues H391 and C421.

Belongs to the thiolase-like superfamily. Thiolase family. In terms of assembly, heterotetramer of two alpha chains (FadJ) and two beta chains (FadI).

The protein localises to the cytoplasm. The enzyme catalyses an acyl-CoA + acetyl-CoA = a 3-oxoacyl-CoA + CoA. Its pathway is lipid metabolism; fatty acid beta-oxidation. Functionally, catalyzes the final step of fatty acid oxidation in which acetyl-CoA is released and the CoA ester of a fatty acid two carbons shorter is formed. The chain is 3-ketoacyl-CoA thiolase from Vibrio parahaemolyticus serotype O3:K6 (strain RIMD 2210633).